The sequence spans 429 residues: Adenylosuccinate synthetase (429 aa).

Residues 12-18 (GDEGKGK) and 40-42 (GHT) each bind GTP. D13 functions as the Proton acceptor in the catalytic mechanism. Residues D13 and G40 each coordinate Mg(2+). IMP is bound by residues 13 to 16 (DEGK), 38 to 41 (NAGH), T128, R142, Q223, T238, and R302. H41 (proton donor) is an active-site residue. 298–304 (VNTGRPR) contacts substrate. GTP-binding positions include R304, 330-332 (KLD), and 412-414 (GVG).

This sequence belongs to the adenylosuccinate synthetase family. Homodimer. The cofactor is Mg(2+).

It localises to the cytoplasm. The enzyme catalyses IMP + L-aspartate + GTP = N(6)-(1,2-dicarboxyethyl)-AMP + GDP + phosphate + 2 H(+). It participates in purine metabolism; AMP biosynthesis via de novo pathway; AMP from IMP: step 1/2. Its function is as follows. Plays an important role in the de novo pathway of purine nucleotide biosynthesis. Catalyzes the first committed step in the biosynthesis of AMP from IMP. The chain is Adenylosuccinate synthetase from Micrococcus luteus (strain ATCC 4698 / DSM 20030 / JCM 1464 / CCM 169 / CCUG 5858 / IAM 1056 / NBRC 3333 / NCIMB 9278 / NCTC 2665 / VKM Ac-2230) (Micrococcus lysodeikticus).